We begin with the raw amino-acid sequence, 250 residues long: Trypsin (250 aa).

Positions 1-15 are cleaved as a signal peptide; sequence MRLLALLLMVGAAVA. Positions 16–22 are cleaved as a propeptide — activation peptide; that stretch reads VPREDGR. In terms of domain architecture, Peptidase S1 spans 23 to 247; sequence IIGGHECAAH…FLGWIERTLE (225 aa). Disulfide bonds link cysteine 29–cysteine 163, cysteine 47–cysteine 63, cysteine 133–cysteine 236, cysteine 140–cysteine 209, cysteine 174–cysteine 188, and cysteine 199–cysteine 223. Residues histidine 62 and aspartate 106 each act as charge relay system in the active site. Residue serine 203 is the Charge relay system of the active site.

This sequence belongs to the peptidase S1 family.

Its subcellular location is the secreted. It is found in the extracellular space. It carries out the reaction Preferential cleavage: Arg-|-Xaa, Lys-|-Xaa.. This chain is Trypsin, found in Pleuronectes platessa (European plaice).